Reading from the N-terminus, the 573-residue chain is Probable D-xylulose kinase A (573 aa).

The substrate site is built by histidine 97, arginine 168, aspartate 284, and asparagine 285. Residues tryptophan 366, 471–472 (GG), and asparagine 475 each bind ATP.

This sequence belongs to the FGGY kinase family.

It localises to the cytoplasm. It catalyses the reaction D-xylulose + ATP = D-xylulose 5-phosphate + ADP + H(+). Its function is as follows. Highly specific D-xylulose kinase which participates in the catabolism of xylose. Xylose is a major component of hemicelluloses such as xylan. Most fungi utilize D-xylose via three enzymatic reactions, xylose reductase (XR), xylitol dehydrogenase (XDH), and xylulokinase, to form xylulose 5-phosphate, which enters pentose phosphate pathway. This is Probable D-xylulose kinase A (xkiA) from Aspergillus fumigatus (strain ATCC MYA-4609 / CBS 101355 / FGSC A1100 / Af293) (Neosartorya fumigata).